We begin with the raw amino-acid sequence, 577 residues long: Maltase A1 (577 aa).

Positions Met1 to Ala19 are cleaved as a signal peptide. Residues Asn119 and Asn151 are each glycosylated (N-linked (GlcNAc...) asparagine). Asp221 (nucleophile) is an active-site residue. An N-linked (GlcNAc...) asparagine glycan is attached at Asn244. Glu297 functions as the Proton donor in the catalytic mechanism. N-linked (GlcNAc...) asparagine glycosylation is found at Asn315 and Asn331.

The protein belongs to the glycosyl hydrolase 13 family.

It carries out the reaction Hydrolysis of terminal, non-reducing (1-&gt;4)-linked alpha-D-glucose residues with release of alpha-D-glucose.. This chain is Maltase A1 (Mal-A1), found in Drosophila melanogaster (Fruit fly).